A 349-amino-acid polypeptide reads, in one-letter code: Protein Wnt-7a (349 aa).

Positions Met1–Ala31 are cleaved as a signal peptide. 5 disulfide bridges follow: Cys73–Cys84, Cys123–Cys131, Cys133–Cys152, Cys200–Cys214, and Cys202–Cys209. Residues Asn83 and Asn127 are each glycosylated (N-linked (GlcNAc...) asparagine). Ser206 is lipidated: O-palmitoleoyl serine; by PORCN. Positions Val238–Thr266 are disordered linker. 6 cysteine pairs are disulfide-bonded: Cys278-Cys309, Cys294-Cys304, Cys308-Cys348, Cys324-Cys339, Cys326-Cys336, and Cys331-Cys332. Asn295 carries an N-linked (GlcNAc...) asparagine glycan.

This sequence belongs to the Wnt family. In terms of assembly, forms a soluble 1:1 complex with AFM; this prevents oligomerization and is required for prolonged biological activity. The complex with AFM may represent the physiological form in body fluids. Interacts with PORCN. Interacts (via intrinsically disordered linker region) with RECK; interaction with RECK confers ligand selectivity for Wnt7 in brain endothelial cells and allows these cells to selectively respond to Wnt7. Interacts with FZD5. In terms of processing, palmitoleoylation is required for efficient binding to frizzled receptors. Depalmitoleoylation leads to Wnt signaling pathway inhibition.

It is found in the secreted. The protein resides in the extracellular space. It localises to the extracellular matrix. Ligand for members of the frizzled family of seven transmembrane receptors that functions in the canonical Wnt/beta-catenin signaling pathway. Plays an important role in embryonic development, including dorsal versus ventral patterning during limb development, skeleton development and urogenital tract development. Required for central nervous system (CNS) angiogenesis and blood-brain barrier regulation. Required for normal, sexually dimorphic development of the Mullerian ducts, and for normal fertility in both sexes. Required for normal neural stem cell proliferation in the hippocampus dentate gyrus. Required for normal progress through the cell cycle in neural progenitor cells, for self-renewal of neural stem cells, and for normal neuronal differentiation and maturation. Promotes formation of synapses via its interaction with FZD5. The polypeptide is Protein Wnt-7a (WNT7A) (Pongo pygmaeus (Bornean orangutan)).